The chain runs to 325 residues: Elongation factor P--(R)-beta-lysine ligase (325 aa).

76–78 (SPE) contributes to the substrate binding site. ATP contacts are provided by residues 100–102 (RNE) and Asn-109. Tyr-118 contributes to the substrate binding site. Residue 244-245 (EL) coordinates ATP. Residue Glu-251 coordinates substrate. Gly-300 is a binding site for ATP.

This sequence belongs to the class-II aminoacyl-tRNA synthetase family. EpmA subfamily. Homodimer.

The enzyme catalyses D-beta-lysine + L-lysyl-[protein] + ATP = N(6)-((3R)-3,6-diaminohexanoyl)-L-lysyl-[protein] + AMP + diphosphate + H(+). With EpmB is involved in the beta-lysylation step of the post-translational modification of translation elongation factor P (EF-P). Catalyzes the ATP-dependent activation of (R)-beta-lysine produced by EpmB, forming a lysyl-adenylate, from which the beta-lysyl moiety is then transferred to the epsilon-amino group of a conserved specific lysine residue in EF-P. In Klebsiella pneumoniae (strain 342), this protein is Elongation factor P--(R)-beta-lysine ligase.